Here is a 232-residue protein sequence, read N- to C-terminus: Ubiquinone biosynthesis O-methyltransferase (232 aa).

S-adenosyl-L-methionine is bound by residues arginine 36, glycine 55, aspartate 76, and methionine 120.

It belongs to the methyltransferase superfamily. UbiG/COQ3 family.

The catalysed reaction is a 3-demethylubiquinol + S-adenosyl-L-methionine = a ubiquinol + S-adenosyl-L-homocysteine + H(+). It catalyses the reaction a 3-(all-trans-polyprenyl)benzene-1,2-diol + S-adenosyl-L-methionine = a 2-methoxy-6-(all-trans-polyprenyl)phenol + S-adenosyl-L-homocysteine + H(+). The protein operates within cofactor biosynthesis; ubiquinone biosynthesis. Functionally, O-methyltransferase that catalyzes the 2 O-methylation steps in the ubiquinone biosynthetic pathway. In Burkholderia vietnamiensis (strain G4 / LMG 22486) (Burkholderia cepacia (strain R1808)), this protein is Ubiquinone biosynthesis O-methyltransferase.